The chain runs to 500 residues: MSDFYWLTIIVVLPISAGSLIALLPHRGNKVVRWYTICICLFELLLTTYVFCYHFQLDDPLIQLEEDFNWINLFDFHWRLGIDGLSIGPILLTGFITTLATSAARPVTRNSRLFHFLMLAMYSGQIGLFSSRDLLLFFIMWELELIPVYLLLSMWGGKKRLYSATKFILYTAGGSIFLLMGVLGMGLYGSNEPKLNFETLANQSYPVALEIIFYFGFLIAYAVKSPIIPLHTWLPDTHGEAHYSTCMLLAGILLKMGAYGLVRINMELLPHAHSIFSPWLMIVGTIQIIYAASTSLGQRNLKKRIAYSSVSHMGFIIIGISSITDAGLNGAILQIISHGFIGAALFFLAGTSYDRIRLRYLNEMGGIAILMPRIFTMFSSFSMASLALPGMSGFVAELVIFLGIITSPKYLVVSKILITFVMAIGMILTPIYSLSMSRQMFYGYRLFNVPNSYFVDSGPREIFILICILLPIIGIGIYPDFVLSLSVDKVEAILSNYFHG.

14 consecutive transmembrane segments (helical) span residues 4–24 (FYWL…IALL), 37–57 (ICIC…HFQL), 80–100 (LGID…TTLA), 113–130 (LFHF…GLFS), 134–154 (LLLF…LLSM), 167–187 (FILY…GMGL), 208–228 (ALEI…SPII), 242–262 (HYST…YGLV), 272–292 (AHSI…IYAA), 305–325 (IAYS…SITD), 330–350 (GAIL…FLAG), 386–406 (LALP…GIIT), 416–436 (ILIT…SLSM), and 462–482 (IFIL…PDFV).

It belongs to the complex I subunit 4 family.

The protein resides in the plastid. It is found in the chloroplast thylakoid membrane. It catalyses the reaction a plastoquinone + NADH + (n+1) H(+)(in) = a plastoquinol + NAD(+) + n H(+)(out). The catalysed reaction is a plastoquinone + NADPH + (n+1) H(+)(in) = a plastoquinol + NADP(+) + n H(+)(out). In Nuphar advena (Common spatterdock), this protein is NAD(P)H-quinone oxidoreductase chain 4, chloroplastic.